The chain runs to 518 residues: Chaperonin GroEL (518 aa).

ATP contacts are provided by residues 30 to 33, Lys-51, 87 to 91, and Gly-415; these read TLGP and DGTTT.

The protein belongs to the chaperonin (HSP60) family. Forms a cylinder of 14 subunits composed of two heptameric rings stacked back-to-back. Interacts with the co-chaperonin GroES.

It is found in the cytoplasm. It catalyses the reaction ATP + H2O + a folded polypeptide = ADP + phosphate + an unfolded polypeptide.. Functionally, together with its co-chaperonin GroES, plays an essential role in assisting protein folding. The GroEL-GroES system forms a nano-cage that allows encapsulation of the non-native substrate proteins and provides a physical environment optimized to promote and accelerate protein folding. This chain is Chaperonin GroEL, found in Desulfotalea psychrophila (strain LSv54 / DSM 12343).